A 104-amino-acid polypeptide reads, in one-letter code: Small ribosomal subunit protein uS10 (104 aa).

It belongs to the universal ribosomal protein uS10 family. Part of the 30S ribosomal subunit.

Its function is as follows. Involved in the binding of tRNA to the ribosomes. This Maricaulis maris (strain MCS10) (Caulobacter maris) protein is Small ribosomal subunit protein uS10.